The sequence spans 250 residues: 5'-nucleotidase SurE (250 aa).

4 residues coordinate a divalent metal cation: Asp-9, Asp-10, Ser-40, and Asn-92.

This sequence belongs to the SurE nucleotidase family. Requires a divalent metal cation as cofactor.

It localises to the cytoplasm. It catalyses the reaction a ribonucleoside 5'-phosphate + H2O = a ribonucleoside + phosphate. Nucleotidase that shows phosphatase activity on nucleoside 5'-monophosphates. This Shewanella pealeana (strain ATCC 700345 / ANG-SQ1) protein is 5'-nucleotidase SurE.